Consider the following 525-residue polypeptide: Histidine-rich glycoprotein (525 aa).

An N-terminal signal peptide occupies residues Met1–Ala18. 2 consecutive Cystatin domains span residues Val19 to Ala136 and Asn137 to Gly254. Intrachain disulfides connect Cys24–Cys504, Cys78–Cys89, Cys105–Cys126, Cys203–Cys417, and Cys218–Cys241. Residues Arg41–Lys84 form an interaction with ATP5F1A region. A glycan (N-linked (GlcNAc...) asparagine) is linked at Asn63. Residue Asn125 is glycosylated (N-linked (GlcNAc...) asparagine). The tract at residues Ile252–His407 is disordered. Positions Arg284–His293 are enriched in basic residues. Residues Pro310 to Leu320 are compositionally biased toward pro residues. Positions Ser323–Asp348 are enriched in polar residues. 2 N-linked (GlcNAc...) asparagine glycosylation sites follow: Asn344 and Asn345. The interval Asp348 to His382 is necessary for endothelial cell focal adhesions and anti-angiogenic activities. Composition is skewed to basic residues over residues Pro351–Pro371 and Gln379–His407.

As to quaternary structure, interacts (via the HRR domain) with TPM1; the interaction appears to contribute to the antiangiogenic properties of the HRR domain. Interacts with THBS2; the interaction blocks the antiangiogenic effect of THBS2 with CD36. Interacts with THBS1 (via the TSP type I repeats); the interaction blocks the antiangiogenic effect of THBS1 with CD3. Interacts with PLG (via its Kringle domains); the interaction tethers PLG to the cell surface and enhances its activation. Interacts with HPSE; the interaction is enhanced at acidic pH, partially inhibits binding of HPSE to cell surface receptors and modulates its enzymatic activity. Interacts (via the HRR domain) with TMP1; the interaction partially mediates the antiangiogenic properties of HRG. Interacts with kappa and lambda light chains of IgG molecules. Interacts with ATP5F1A; the interaction occurs on the surface of T-cells and alters their cell morphology in concert with CONA. Binds IgG molecules containing kappa and lambda light chains and inhibits the formation of insoluble immunoglobulin complexes. Interacts with F12; the interaction, which is enhanced in the presence of zinc ions and inhibited by heparin-binding to HRG, inhibits factor XII autoactivation and contact-initiated coagulation. Zn(2+) serves as cofactor. Proteolytic cleavage produces several HRG fragments which are mostly disulfide-linked and, therefore, not released. Cleavage by plasmin is inhibited in the presence of heparin, zinc ions or in an acidic environment. Cleavage reduces binding of HRG to heparan sulfate, but enhances the ability of HRG to bind and tether plasminogen to the cell surface. On platelet activation, releases a 33 kDa antiangiogenic peptide which encompasses the HRR. Also cleaved in the C-terminal by plasmin. In terms of processing, N-glycosylated. As to expression, expressed in macrophages and in malignant cells. Expressed by the liver and secreted in plasma (at protein level).

The protein resides in the secreted. In terms of biological role, plasma glycoprotein that binds a number of ligands such as heme, heparin, heparan sulfate, thrombospondin, plasminogen, and divalent metal ions. Binds heparin and heparin/glycosaminoglycans in a zinc-dependent manner. Binds heparan sulfate on the surface of liver, lung, kidney and heart endothelial cells. Binds to N-sulfated polysaccharide chains on the surface of liver endothelial cells. Inhibits rosette formation. Acts as an adapter protein and is implicated in regulating many processes such as immune complex and pathogen clearance, cell chemotaxis, cell adhesion, angiogenesis, coagulation and fibrinolysis. Mediates clearance of necrotic cells through enhancing the phagocytosis of necrotic cells in a heparan sulfate-dependent pathway. This process can be regulated by the presence of certain HRG ligands such as heparin and zinc ions. Binds to IgG subclasses of immunoglobins containing kappa and lambda light chains with different affinities regulating their clearance and inhibiting the formation of insoluble immune complexes. Tethers plasminogen to the cell surface. Binds T-cells and alters the cell morphology. Modulates angiogenesis by blocking the CD6-mediated antiangiongenic effect of thrombospondins, THBS1 and THBS2. Acts as a regulator of the vascular endothelial growth factor (VEGF) signaling pathway; inhibits endothelial cell motility by reducing VEGF-induced complex formation between PXN/paxillin and ILK/integrin-linked protein kinase and by promoting inhibition of VEGF-induced tyrosine phosphorylation of focal adhesion kinases and alpha-actinins in endothelial cells. Also plays a role in the regulation of tumor angiogenesis and tumor immune surveillance. Normalizes tumor vessels and promotes antitumor immunity by polarizing tumor-associated macrophages, leading to decreased tumor growth and metastasis. The polypeptide is Histidine-rich glycoprotein (HRG) (Homo sapiens (Human)).